Consider the following 707-residue polypeptide: Zinc finger CCHC domain-containing protein 8 (707 aa).

Position 2 is an N-acetylalanine (Ala2). Residues Phe16–Val44 are disordered. Over residues Asp34–Gly43 the composition is skewed to acidic residues. Residues Gly45–Pro80 are a coiled coil. Residues Pro227–Met244 form a CCHC-type zinc finger. RBM7 binding stretches follow at residues Phe286 to Leu299 and Phe309 to Lys324. Thr342 bears the Phosphothreonine mark. Disordered regions lie at residues Ala409–Glu518, Leu531–Cys607, and Gln641–Ile660. Lys413 is covalently cross-linked (Glycyl lysine isopeptide (Lys-Gly) (interchain with G-Cter in SUMO2)). Residues Ser456–Gln465 are compositionally biased toward low complexity. A compositionally biased stretch (pro residues) spans Pro466–Thr496. Phosphothreonine is present on residues Thr472, Thr479, and Thr485. Phosphothreonine; by GSK3 is present on Thr492. Positions Thr516 to Ser539 form a coiled coil. Residues Leu549–Cys559 show a composition bias toward polar residues. Thr577 carries the post-translational modification Phosphothreonine. Ser598 carries the phosphoserine modification. The segment covering Ser598–Cys607 has biased composition (polar residues). The residue at position 648 (Thr648) is a Phosphothreonine. 3 positions are modified to phosphoserine: Ser649, Ser658, and Ser695. The tract at residues Pro659–Glu707 is MTREX binding.

The protein belongs to the ZCCHC8 family. As to quaternary structure, component of a nuclear TRAMP-like complex, an ATP-dependent exosome regulatory complex consisting of a helicase (MTREX), an oligadenylate polymerase (TENT4B or TENT4A), and a substrate specific RNA-binding factor (ZCCHC7 or ZCCHC8). Several TRAMP-like complexes exist with specific compositions and are associated with nuclear, or nucleolar RNA exosomes. Identified in the spliceosome C complex. Component of the nuclear exosome targeting (NEXT) complex composed of MTREX, ZCCHC8, and RBM7 that directs a subset of non-coding short-lived RNAs for exosomal degradation. Interacts with proteins involved in RNA processing and degradation such as MTREX and RBM7; interaction with MTREX enhances MTREX RNA helicase activity and bridges between RBM7 and MTREX. Interacts with TERC, the telomerase RNA component. In terms of processing, phosphorylation at Thr-492 by GSK3 is triggered in cells entering mitosis; this phosphorylation is greatly enhanced by nocodazole treatment, but reduced by lithium.

It localises to the nucleus. Its subcellular location is the nucleoplasm. Scaffolding subunit of the trimeric nuclear exosome targeting (NEXT) complex that is involved in the surveillance and turnover of aberrant transcripts and non-coding RNAs. NEXT functions as an RNA exosome cofactor that directs a subset of non-coding short-lived RNAs for exosomal degradation. May be involved in pre-mRNA splicing. It is required for 3'-end maturation of telomerase RNA component (TERC), TERC 3'-end targeting to the nuclear RNA exosome, and for telomerase function. The protein is Zinc finger CCHC domain-containing protein 8 (ZCCHC8) of Homo sapiens (Human).